Here is a 130-residue protein sequence, read N- to C-terminus: Phosphoribosyl-AMP cyclohydrolase (130 aa).

Residue Asp-77 participates in Mg(2+) binding. Cys-78 is a binding site for Zn(2+). Mg(2+)-binding residues include Asp-79 and Asp-81. Residues Cys-95 and Cys-102 each contribute to the Zn(2+) site.

Belongs to the PRA-CH family. Homodimer. Requires Mg(2+) as cofactor. It depends on Zn(2+) as a cofactor.

Its subcellular location is the cytoplasm. It carries out the reaction 1-(5-phospho-beta-D-ribosyl)-5'-AMP + H2O = 1-(5-phospho-beta-D-ribosyl)-5-[(5-phospho-beta-D-ribosylamino)methylideneamino]imidazole-4-carboxamide. Its pathway is amino-acid biosynthesis; L-histidine biosynthesis; L-histidine from 5-phospho-alpha-D-ribose 1-diphosphate: step 3/9. Functionally, catalyzes the hydrolysis of the adenine ring of phosphoribosyl-AMP. In Pseudomonas putida (strain GB-1), this protein is Phosphoribosyl-AMP cyclohydrolase.